The chain runs to 305 residues: Ribonuclease BN (305 aa).

Residues histidine 64, histidine 66, aspartate 68, histidine 69, histidine 141, aspartate 212, and histidine 270 each coordinate Zn(2+). Aspartate 68 acts as the Proton acceptor in catalysis.

Belongs to the RNase Z family. RNase BN subfamily. As to quaternary structure, homodimer. The cofactor is Zn(2+).

Zinc phosphodiesterase, which has both exoribonuclease and endoribonuclease activities. This is Ribonuclease BN from Salmonella agona (strain SL483).